The sequence spans 154 residues: Large ribosomal subunit protein uL13 (154 aa).

The protein belongs to the universal ribosomal protein uL13 family. As to quaternary structure, part of the 50S ribosomal subunit.

This protein is one of the early assembly proteins of the 50S ribosomal subunit, although it is not seen to bind rRNA by itself. It is important during the early stages of 50S assembly. The chain is Large ribosomal subunit protein uL13 from Rhizobium meliloti (strain 1021) (Ensifer meliloti).